Consider the following 288-residue polypeptide: Bifunctional protein FolD (288 aa).

NADP(+)-binding positions include 166–168 (GAS) and Ile-232.

It belongs to the tetrahydrofolate dehydrogenase/cyclohydrolase family. In terms of assembly, homodimer.

It carries out the reaction (6R)-5,10-methylene-5,6,7,8-tetrahydrofolate + NADP(+) = (6R)-5,10-methenyltetrahydrofolate + NADPH. It catalyses the reaction (6R)-5,10-methenyltetrahydrofolate + H2O = (6R)-10-formyltetrahydrofolate + H(+). Its pathway is one-carbon metabolism; tetrahydrofolate interconversion. Catalyzes the oxidation of 5,10-methylenetetrahydrofolate to 5,10-methenyltetrahydrofolate and then the hydrolysis of 5,10-methenyltetrahydrofolate to 10-formyltetrahydrofolate. This chain is Bifunctional protein FolD, found in Erwinia tasmaniensis (strain DSM 17950 / CFBP 7177 / CIP 109463 / NCPPB 4357 / Et1/99).